The primary structure comprises 362 residues: Mortality factor 4-like protein 1 (362 aa).

In terms of domain architecture, Tudor-knot spans 12 to 51; that stretch reads QEGERVLCFHGPLLYEAKCVKVAIKDKQVKYFIHYSGWNK. Residues 26-62 are interaction with KAT8; the sequence is YEAKCVKVAIKDKQVKYFIHYSGWNKKSAVRPRRSEK. The disordered stretch occupies residues 113–182; the sequence is RELQKANQEQ…RKKRARVDPT (70 aa). Positions 133 to 266 are sufficient for interaction with SIN3A; sequence PGKKTSGLQQ…VAGIKEYFNV (134 aa). The short motif at 135–146 is the Nuclear localization signal element; the sequence is KKTSGLQQKNVE. Lys143 carries the N6-acetyllysine modification. The interaction with RB1-1 stretch occupies residues 164–230; the sequence is STSETPQPPR…FYLPAKKNVD (67 aa). Positions 188–342 are sufficient for interaction with PHF12; sequence TFMNRVEVKV…FLKYLAKNSA (155 aa). Residues 191–362 enclose the MRG domain; the sequence is NRVEVKVKIP…APPEYHRKAV (172 aa). Positions 323–344 are interaction with RB1-2; it reads LALLLNYLHDFLKYLAKNSATL.

In terms of assembly, component of the NuA4 histone acetyltransferase complex which contains the catalytic subunit KAT5/TIP60 and the subunits EP400, TRRAP/PAF400, BRD8/SMAP, EPC1, DMAP1/DNMAP1, RUVBL1/TIP49, RUVBL2, ING3, actin, ACTL6A/BAF53A, MORF4L1/MRG15, MORF4L2/MRGX, MRGBP, YEATS4/GAS41, VPS72/YL1 and MEAF6. The NuA4 complex interacts with MYC and the adenovirus E1A protein. MORF4L1 may also participate in the formation of NuA4 related complexes which lack the KAT5/TIP60 catalytic subunit, but which include the SWI/SNF related protein SRCAP. Component of the mSin3A histone deacetylase complex, which includes SIN3A, HDAC2, ARID4B, MORF4L1, RBBP4/RbAp48, and RBBP7/RbAp46. May also interact with PHF12 and one or more as yet undefined members of the TLE (transducin-like enhancer of split) family of transcriptional repressors. Component of the SIN3B complex, which includes SIN3B, HDAC2 or HDAC1, PHF12 and MORF4L1. Interacts with RB1 and KAT8. Interacts with the N-terminus of MRFAP1. Found in a complex composed of MORF4L1, MRFAP1 and RB1. Interacts with the entire BRCA complex, which contains BRCA1, PALB2, BRCA2 and RAD51. Interacts with PALB2. Forms a complex with MSL1 and NUPR1.

Its subcellular location is the nucleus. Its function is as follows. Component of the NuA4 histone acetyltransferase (HAT) complex which is involved in transcriptional activation of select genes principally by acetylation of nucleosomal histones H4 and H2A. This modification may both alter nucleosome - DNA interactions and promote interaction of the modified histones with other proteins which positively regulate transcription. This complex may be required for the activation of transcriptional programs associated with oncogene and proto-oncogene mediated growth induction, tumor suppressor mediated growth arrest and replicative senescence, apoptosis, and DNA repair. The NuA4 complex ATPase and helicase activities seem to be, at least in part, contributed by the association of RUVBL1 and RUVBL2 with EP400. NuA4 may also play a direct role in DNA repair when directly recruited to sites of DNA damage. As part of the SIN3B complex represses transcription and counteracts the histone acetyltransferase activity of EP300 through the recognition H3K27ac marks by PHF12 and the activity of the histone deacetylase HDAC2. SIN3B complex is recruited downstream of the constitutively active genes transcriptional start sites through interaction with histones and mitigates histone acetylation and RNA polymerase II progression within transcribed regions contributing to the regulation of transcription. Required for homologous recombination repair (HRR) and resistance to mitomycin C (MMC). Involved in the localization of PALB2, BRCA2 and RAD51, but not BRCA1, to DNA-damage foci. This chain is Mortality factor 4-like protein 1 (Morf4l1), found in Mus musculus (Mouse).